The sequence spans 388 residues: P2X purinoceptor 4 (388 aa).

Residues 1 to 33 (MAGCCSVLGSFLFEYDTPRIVLIRSRKVGLMNR) are Cytoplasmic-facing. The chain crosses the membrane as a helical span at residues 34-54 (AVQLLILAYVIGWVFVWEKGY). Residues 55–338 (QETDSVVSSV…KFDIIPTMIN (284 aa)) are Extracellular-facing. Residues K67 and K69 each coordinate ATP. CTP contacts are provided by K67 and K69. Residues N75 and N110 are each glycosylated (N-linked (GlcNAc...) asparagine). Disulfide bonds link C116-C165, C126-C149, and C132-C159. N-linked (GlcNAc...) asparagine glycans are attached at residues N153 and N184. ATP is bound by residues T186 and L188. Position 186 (T186) interacts with CTP. N199 and N208 each carry an N-linked (GlcNAc...) asparagine glycan. Intrachain disulfides connect C217-C227 and C261-C270. ATP-binding residues include N293, R295, and K313. N293, R295, and K313 together coordinate CTP. Residues 339-359 (VGSGLALLGVATVLCDVIVLY) traverse the membrane as a helical segment. At 360-388 (CMKKKYYYRDKKYKYVEDYEQGLSGEMNQ) the chain is on the cytoplasmic side.

This sequence belongs to the P2X receptor family. In terms of assembly, functional P2RXs are organized as homomeric and heteromeric trimers. Forms heterotrimer with P2RX1. Interacts with P2RX7 (via C-terminus); this interaction is functional only in the presence of ATP. Forms heterotrimer with P2RX4; functional differences between homomeric P2RX4 and P2RX4/6 heterotrimer are minor. Interacts with AP1M2. Widespread distribution in the brain. Strongly expressed in microglial cells. Also expressed in epithelial cells.

Its subcellular location is the cell membrane. It is found in the lysosome membrane. The catalysed reaction is K(+)(in) = K(+)(out). The enzyme catalyses Na(+)(in) = Na(+)(out). It catalyses the reaction Ca(2+)(in) = Ca(2+)(out). Its activity is regulated as follows. Activated by ATP. pH-dependent and inhibited by acidic pH. In terms of biological role, ATP-gated nonselective transmembrane cation channel permeable to potassium, sodium and calcium. CTP, but not GTP or UTP, functions as a weak affinity agonist for P2RX4. Activated by extracellularly released ATP, it plays multiple role in immunity and central nervous system physiology. Plays a key role in initial steps of T-cell activation and Ca(2+) microdomain formation. Also participates in basal T-cell activity without TCR/CD3 stimulation. Promotes the differentiation and activation of Th17 cells via expression of retinoic acid-related orphan receptor C/RORC. Upon activation, drives microglia motility via the PI3K/Akt pathway. Could also function as an ATP-gated cation channel of lysosomal membranes. This chain is P2X purinoceptor 4 (P2rx4), found in Rattus norvegicus (Rat).